Here is a 323-residue protein sequence, read N- to C-terminus: uncharacterized protein (323 aa).

The segment at 1 to 21 is disordered; the sequence is MGSYYSTESTKSNESNETTNN. The N-myristoyl glycine; by host moiety is linked to residue G2.

This is an uncharacterized protein from Acanthamoeba polyphaga (Amoeba).